Here is a 216-residue protein sequence, read N- to C-terminus: uncharacterized protein (216 aa).

The disordered stretch occupies residues 55-216 (NEDKAEAMSN…NEKEKDVNPK (162 aa)). Composition is skewed to basic and acidic residues over residues 134–152 (LTEK…DNHV), 177–187 (KINDKSDDTLH), and 207–216 (NEKEKDVNPK).

This is an uncharacterized protein from Caenorhabditis elegans.